Consider the following 225-residue polypeptide: Ras-related protein Rab-21 (225 aa).

Residue Ala-2 is modified to N-acetylalanine. Positions 28, 31, 32, 33, 34, 45, 46, 48, 50, and 51 each coordinate GTP. Residue Thr-33 participates in Mg(2+) binding. The Switch 1 motif lies at 43-56 (KFNDKHITTLQASF). Mg(2+)-binding residues include Thr-51 and Asp-74. Residues 76 to 94 (AGQERFHALGPIYYRDSNG) carry the Switch 2 motif. GTP contacts are provided by Gly-77, Asn-132, Lys-133, Asp-135, Ala-163, and Lys-164. A disordered region spans residues 188–225 (ERAKGNGSSQPGTARRGVQIIDDEPQAQTSGGGCCSSG). 2 S-geranylgeranyl cysteine lipidation sites follow: Cys-221 and Cys-222. Cys-222 carries the cysteine methyl ester modification. Residues 223–225 (SSG) constitute a propeptide, removed in mature form.

Belongs to the small GTPase superfamily. Rab family. In terms of assembly, interacts with the cytoplasmic tail of integrins ITGA1, ITGA2, ITGA5, ITGA6, ITGA11 and ITGB1. Interacts with RABGEF1 (via VPS9 domain). Interacts with ANKRD27. Interacts with VAMP7. Interacts (in GTP-bound form) with VAMP8 in response to starvation; the interaction probably regulates VAMP8 endolysosomal trafficking. Interacts (active GTP-bound form) with TMED10; the interaction is indirect and regulates TMED10 abundance and localization at the Golgi. Mg(2+) is required as a cofactor. In terms of tissue distribution, widely expressed. In jejunal tissue, predominantly expressed in the apical region of the epithelial cell layer of the villi, weak expression, if any, in the crypt epithelium. Capillary endothelium and some cell types in the lamina propria also show expression.

It is found in the endoplasmic reticulum membrane. Its subcellular location is the golgi apparatus. It localises to the trans-Golgi network. The protein resides in the golgi apparatus membrane. The protein localises to the early endosome membrane. It is found in the cytoplasmic vesicle membrane. Its subcellular location is the cleavage furrow. It localises to the cell projection. The protein resides in the neuron projection. The enzyme catalyses GTP + H2O = GDP + phosphate + H(+). With respect to regulation, regulated by guanine nucleotide exchange factors (GEFs) including ANKRD27 and RABGEF1, which promote the exchange of bound GDP for free GTP. Regulated by GTPase activating proteins (GAPs) which increase the GTP hydrolysis activity. Inhibited by GDP dissociation inhibitors (GDIs). In terms of biological role, the small GTPases Rab are key regulators of intracellular membrane trafficking, from the formation of transport vesicles to their fusion with membranes. Rabs cycle between an inactive GDP-bound form and an active GTP-bound form that is able to recruit to membranes different sets of downstream effectors directly responsible for vesicle formation, movement, tethering and fusion. RAB21 is involved in membrane trafficking control. During the mitosis of adherent cells, controls the endosomal trafficking of integrins which is required for the successful completion of cytokinesis. Regulates integrin internalization and recycling, but does not influence the traffic of endosomally translocated receptors in general. As a result, may regulate cell adhesion and migration. Involved in neurite growth. Following SBF2/MTMT13-mediated activation in response to starvation-induced autophagy, binds to and regulates SNARE protein VAMP8 endolysosomal transport required for SNARE-mediated autophagosome-lysosome fusion. Modulates protein levels of the cargo receptors TMED2 and TMED10, and required for appropriate Golgi localization of TMED10. This Homo sapiens (Human) protein is Ras-related protein Rab-21.